Consider the following 373-residue polypeptide: Probable tRNA sulfurtransferase (373 aa).

Residues 54-158 enclose the THUMP domain; sequence NKNIEELSKV…NDVAYFYHKI (105 aa). Residues 176–177, 201–202, lysine 256, glycine 278, and glutamine 287 each bind ATP; these read LF and NF.

The protein belongs to the ThiI family.

Its subcellular location is the cytoplasm. It catalyses the reaction [ThiI sulfur-carrier protein]-S-sulfanyl-L-cysteine + a uridine in tRNA + 2 reduced [2Fe-2S]-[ferredoxin] + ATP + H(+) = [ThiI sulfur-carrier protein]-L-cysteine + a 4-thiouridine in tRNA + 2 oxidized [2Fe-2S]-[ferredoxin] + AMP + diphosphate. It carries out the reaction [ThiS sulfur-carrier protein]-C-terminal Gly-Gly-AMP + S-sulfanyl-L-cysteinyl-[cysteine desulfurase] + AH2 = [ThiS sulfur-carrier protein]-C-terminal-Gly-aminoethanethioate + L-cysteinyl-[cysteine desulfurase] + A + AMP + 2 H(+). It functions in the pathway cofactor biosynthesis; thiamine diphosphate biosynthesis. Its function is as follows. Catalyzes the ATP-dependent transfer of a sulfur to tRNA to produce 4-thiouridine in position 8 of tRNAs, which functions as a near-UV photosensor. Also catalyzes the transfer of sulfur to the sulfur carrier protein ThiS, forming ThiS-thiocarboxylate. This is a step in the synthesis of thiazole, in the thiamine biosynthesis pathway. The sulfur is donated as persulfide by IscS. The sequence is that of Probable tRNA sulfurtransferase from Saccharolobus islandicus (strain M.14.25 / Kamchatka #1) (Sulfolobus islandicus).